Reading from the N-terminus, the 90-residue chain is UPF0223 protein SH1855 (90 aa).

Belongs to the UPF0223 family.

This Staphylococcus haemolyticus (strain JCSC1435) protein is UPF0223 protein SH1855.